We begin with the raw amino-acid sequence, 262 residues long: DNA repair protein RecO (262 aa).

The protein belongs to the RecO family.

Involved in DNA repair and RecF pathway recombination. This is DNA repair protein RecO from Enterococcus faecalis (strain ATCC 700802 / V583).